We begin with the raw amino-acid sequence, 297 residues long: Ubiquinone biosynthesis protein COQ4, mitochondrial (297 aa).

A mitochondrion-targeting transit peptide spans 1–54; sequence MLSSARARLPISLCSFSLPFARLPNTLSRYQETWQRLPGRTHPTRSIRTTPAYE. Residues His-178, Asp-179, His-182, and Glu-194 each contribute to the Zn(2+) site.

This sequence belongs to the COQ4 family. In terms of assembly, component of a multi-subunit COQ enzyme complex, composed of at least COQ3, COQ4, COQ5, COQ6, COQ7 and COQ9. The cofactor is Zn(2+).

Its subcellular location is the mitochondrion inner membrane. The enzyme catalyses a 4-hydroxy-3-methoxy-5-(all-trans-polyprenyl)benzoate + H(+) = a 2-methoxy-6-(all-trans-polyprenyl)phenol + CO2. It functions in the pathway cofactor biosynthesis; ubiquinone biosynthesis. Functionally, lyase that catalyzes the C1-decarboxylation of 4-hydroxy-3-methoxy-5-(all-trans-polyprenyl)benzoic acid into 2-methoxy-6-(all-trans-polyprenyl)phenol during ubiquinone biosynthesis. This chain is Ubiquinone biosynthesis protein COQ4, mitochondrial, found in Laccaria bicolor (strain S238N-H82 / ATCC MYA-4686) (Bicoloured deceiver).